A 326-amino-acid polypeptide reads, in one-letter code: Peroxidase 41 (326 aa).

A signal peptide spans 1 to 20 (MSSVINVLFVVLVFVPSIYS). The N-linked (GlcNAc...) asparagine glycan is linked to Asn-25. 4 disulfides stabilise this stretch: Cys-35–Cys-116, Cys-68–Cys-73, Cys-122–Cys-318, and Cys-201–Cys-228. His-66 acts as the Proton acceptor in catalysis. Ca(2+)-binding residues include Asp-67, Gly-72, Asp-74, and Ser-76. A substrate-binding site is contributed by Pro-164. Asn-167 carries N-linked (GlcNAc...) asparagine glycosylation. Position 194 (His-194) interacts with heme b. A Ca(2+)-binding site is contributed by Thr-195. Asn-234 carries N-linked (GlcNAc...) asparagine glycosylation. Ca(2+) is bound by residues Asp-242, Thr-245, and Asp-250. An N-linked (GlcNAc...) asparagine glycan is attached at Asn-286.

This sequence belongs to the peroxidase family. Classical plant (class III) peroxidase subfamily. It depends on heme b as a cofactor. The cofactor is Ca(2+).

It is found in the secreted. The catalysed reaction is 2 a phenolic donor + H2O2 = 2 a phenolic radical donor + 2 H2O. In terms of biological role, removal of H(2)O(2), oxidation of toxic reductants, biosynthesis and degradation of lignin, suberization, auxin catabolism, response to environmental stresses such as wounding, pathogen attack and oxidative stress. These functions might be dependent on each isozyme/isoform in each plant tissue. This is Peroxidase 41 (PER41) from Arabidopsis thaliana (Mouse-ear cress).